Here is a 621-residue protein sequence, read N- to C-terminus: Nuclear distribution protein nudE homolog 1 (621 aa).

Polar residues-rich tracts occupy residues 1-20 (MPSA…SRSD) and 231-263 (RSPS…TLKT). Disordered regions lie at residues 1–21 (MPSA…RSDQ), 218–372 (ELQN…PKSG), 389–537 (ERVQ…GVVN), and 569–621 (ISTP…GETY). Positions 18–219 (RSDQLAWYKS…IHEKLRNAEL (202 aa)) form a coiled coil. 2 stretches are compositionally biased toward low complexity: residues 264–288 (SLMS…RKSM) and 300–310 (SASDSSFGSRS). Residues 323-341 (SRATSYAFTSNRPTPSVTN) are compositionally biased toward polar residues. 3 stretches are compositionally biased toward low complexity: residues 353–362 (NENTNKHNNN), 404–414 (SPSRTSSRSGS), and 469–496 (SRPS…PSTR). Positions 599-613 (DRLEGDMGPPERKSN) are enriched in basic and acidic residues.

Belongs to the nudE family. Self-associates. Interacts with nudF.

The protein localises to the cytoplasm. The protein resides in the cytoskeleton. In terms of biological role, required for nuclear migration within hyphae during vegetative growth. The polypeptide is Nuclear distribution protein nudE homolog 1 (nde1) (Aspergillus fumigatus (strain ATCC MYA-4609 / CBS 101355 / FGSC A1100 / Af293) (Neosartorya fumigata)).